The chain runs to 58 residues: Large ribosomal subunit protein uL30 (58 aa).

The protein belongs to the universal ribosomal protein uL30 family. As to quaternary structure, part of the 50S ribosomal subunit.

In Azotobacter vinelandii (strain DJ / ATCC BAA-1303), this protein is Large ribosomal subunit protein uL30.